The chain runs to 82 residues: Small ribosomal subunit protein bS18 (82 aa).

The interval 1–21 (MKRNNSKKVRVEPTRRPKKNP) is disordered.

The protein belongs to the bacterial ribosomal protein bS18 family. In terms of assembly, part of the 30S ribosomal subunit. Forms a tight heterodimer with protein bS6.

Its function is as follows. Binds as a heterodimer with protein bS6 to the central domain of the 16S rRNA, where it helps stabilize the platform of the 30S subunit. The protein is Small ribosomal subunit protein bS18 of Corynebacterium kroppenstedtii (strain DSM 44385 / JCM 11950 / CIP 105744 / CCUG 35717).